Consider the following 748-residue polypeptide: Malate synthase G (748 aa).

Acetyl-CoA contacts are provided by residues Val-141, 148–149 (RF), Ser-298, and Arg-335. Catalysis depends on Arg-362, which acts as the Proton acceptor. Glyoxylate contacts are provided by residues Arg-362, Glu-453, and 478-481 (GFLD). Residues Glu-453 and Asp-481 each contribute to the Mg(2+) site. Pro-562 contacts acetyl-CoA. Position 639 is a cysteine sulfenic acid (-SOH) (Cys-639). Asp-653 functions as the Proton donor in the catalytic mechanism.

The protein belongs to the malate synthase family. GlcB subfamily. Monomer. The cofactor is Mg(2+).

It is found in the cytoplasm. It catalyses the reaction glyoxylate + acetyl-CoA + H2O = (S)-malate + CoA + H(+). It functions in the pathway carbohydrate metabolism; glyoxylate cycle; (S)-malate from isocitrate: step 2/2. Functionally, involved in the glycolate utilization. Catalyzes the condensation and subsequent hydrolysis of acetyl-coenzyme A (acetyl-CoA) and glyoxylate to form malate and CoA. The polypeptide is Malate synthase G (Corynebacterium efficiens (strain DSM 44549 / YS-314 / AJ 12310 / JCM 11189 / NBRC 100395)).